Here is a 563-residue protein sequence, read N- to C-terminus: (-)-germacrene D synthase (563 aa).

Positions 44–71 (TEITAAEKEELEKQKEKVKNLLDQTPND) form a coiled coil. Positions 314 and 318 each coordinate Mn(2+). Residues 314–318 (DDIYD) carry the DDXXD motif motif. Homodimerization stretches follow at residues 320 to 326 (YGSLDEL) and 392 to 429 (EAEW…VGME). Mn(2+) is bound by residues Asp-459 and Glu-467.

The protein belongs to the terpene synthase family. As to quaternary structure, homodimer. Mn(2+) is required as a cofactor. The cofactor is Mg(2+). In terms of tissue distribution, expressed in peltate glandular trichomes. Present at low levels in flowers, leaves and stems.

The catalysed reaction is (2E,6E)-farnesyl diphosphate = (-)-germacrene D + diphosphate. Its pathway is secondary metabolite biosynthesis; terpenoid biosynthesis. Functionally, involved in the biosynthesis of phenolic sesquiterpenes natural products. Sesquiterpene synthase that catalyzes mainly the formation of (-)-germacrene D and minor amounts of other sesquiterpenes (e.g. bicyclo-germacrene) from farnesyl diphosphate (FPP). Also triggers moderate amounts formation of myrcene, limonene, terpinolene and linalool in the presence of geranyl diphosphate (GPP). The sequence is that of (-)-germacrene D synthase from Origanum vulgare (Wild marjoram).